A 76-amino-acid polypeptide reads, in one-letter code: DNA-directed RNA polymerase subunit Rpo5 (76 aa).

It belongs to the archaeal Rpo5/eukaryotic RPB5 RNA polymerase subunit family. Part of the RNA polymerase complex.

It localises to the cytoplasm. It catalyses the reaction RNA(n) + a ribonucleoside 5'-triphosphate = RNA(n+1) + diphosphate. In terms of biological role, DNA-dependent RNA polymerase (RNAP) catalyzes the transcription of DNA into RNA using the four ribonucleoside triphosphates as substrates. In Archaeoglobus fulgidus (strain ATCC 49558 / DSM 4304 / JCM 9628 / NBRC 100126 / VC-16), this protein is DNA-directed RNA polymerase subunit Rpo5.